We begin with the raw amino-acid sequence, 322 residues long: Transaldolase (322 aa).

The active-site Schiff-base intermediate with substrate is K132. A phosphoserine mark is found at S268 and S269.

Belongs to the transaldolase family. Type 1 subfamily. Homodimer.

It catalyses the reaction D-sedoheptulose 7-phosphate + D-glyceraldehyde 3-phosphate = D-erythrose 4-phosphate + beta-D-fructose 6-phosphate. It functions in the pathway carbohydrate degradation; pentose phosphate pathway; D-glyceraldehyde 3-phosphate and beta-D-fructose 6-phosphate from D-ribose 5-phosphate and D-xylulose 5-phosphate (non-oxidative stage): step 2/3. Transaldolase is important for the balance of metabolites in the pentose-phosphate pathway. The protein is Transaldolase (tal1) of Schizosaccharomyces pombe (strain 972 / ATCC 24843) (Fission yeast).